We begin with the raw amino-acid sequence, 285 residues long: Biotin synthase (285 aa).

A Radical SAM core domain is found at 2–223; that stretch reads STRKQIFLCA…RRAHTLLGED (222 aa). 3 residues coordinate [4Fe-4S] cluster: cysteine 20, cysteine 24, and cysteine 27. 3 residues coordinate [2Fe-2S] cluster: cysteine 64, cysteine 99, and cysteine 157.

This sequence belongs to the radical SAM superfamily. Biotin synthase family. As to quaternary structure, homodimer. [4Fe-4S] cluster is required as a cofactor. The cofactor is [2Fe-2S] cluster.

The enzyme catalyses (4R,5S)-dethiobiotin + (sulfur carrier)-SH + 2 reduced [2Fe-2S]-[ferredoxin] + 2 S-adenosyl-L-methionine = (sulfur carrier)-H + biotin + 2 5'-deoxyadenosine + 2 L-methionine + 2 oxidized [2Fe-2S]-[ferredoxin]. The protein operates within cofactor biosynthesis; biotin biosynthesis; biotin from 7,8-diaminononanoate: step 2/2. Catalyzes the conversion of dethiobiotin (DTB) to biotin by the insertion of a sulfur atom into dethiobiotin via a radical-based mechanism. The polypeptide is Biotin synthase (Sulfurovum sp. (strain NBC37-1)).